Here is a 282-residue protein sequence, read N- to C-terminus: Centromere protein P (282 aa).

Positions 1-80 (MEQKYEEDIQ…KDLRRQTEIN (80 aa)) form a coiled coil.

The protein belongs to the CENP-P/CTF19 family.

It localises to the nucleus. The protein localises to the chromosome. The protein resides in the centromere. In terms of biological role, probable component of a centromeric complex involved in assembly of kinetochore proteins, mitotic progression and chromosome segregation. In Danio rerio (Zebrafish), this protein is Centromere protein P (cenpp).